The chain runs to 391 residues: Phosphoglycerate kinase (391 aa).

Substrate is bound by residues 21 to 23 (DLN), Arg36, 59 to 62 (HLGR), Arg113, and Arg146. Residues Lys197, Glu319, and 345 to 348 (GGDT) contribute to the ATP site.

The protein belongs to the phosphoglycerate kinase family. In terms of assembly, monomer.

The protein resides in the cytoplasm. It catalyses the reaction (2R)-3-phosphoglycerate + ATP = (2R)-3-phospho-glyceroyl phosphate + ADP. It participates in carbohydrate degradation; glycolysis; pyruvate from D-glyceraldehyde 3-phosphate: step 2/5. The polypeptide is Phosphoglycerate kinase (Stenotrophomonas maltophilia (strain K279a)).